Consider the following 214-residue polypeptide: Cytochrome c biogenesis ATP-binding export protein CcmA (214 aa).

The ABC transporter domain occupies Leu-16–Ala-212. Residue Gly-48–Thr-55 coordinates ATP.

It belongs to the ABC transporter superfamily. CcmA exporter (TC 3.A.1.107) family. In terms of assembly, the complex is composed of two ATP-binding proteins (CcmA) and two transmembrane proteins (CcmB).

It localises to the cell inner membrane. The catalysed reaction is heme b(in) + ATP + H2O = heme b(out) + ADP + phosphate + H(+). Part of the ABC transporter complex CcmAB involved in the biogenesis of c-type cytochromes; once thought to export heme, this seems not to be the case, but its exact role is uncertain. Responsible for energy coupling to the transport system. The polypeptide is Cytochrome c biogenesis ATP-binding export protein CcmA (Maricaulis maris (strain MCS10) (Caulobacter maris)).